Here is a 377-residue protein sequence, read N- to C-terminus: Succinyl-diaminopimelate desuccinylase (377 aa).

Residue His67 coordinates Zn(2+). Asp69 is an active-site residue. Residue Asp100 participates in Zn(2+) binding. The active-site Proton acceptor is Glu134. Zn(2+) contacts are provided by Glu135, Glu163, and His349.

The protein belongs to the peptidase M20A family. DapE subfamily. In terms of assembly, homodimer. It depends on Zn(2+) as a cofactor. Co(2+) is required as a cofactor.

The enzyme catalyses N-succinyl-(2S,6S)-2,6-diaminopimelate + H2O = (2S,6S)-2,6-diaminopimelate + succinate. The protein operates within amino-acid biosynthesis; L-lysine biosynthesis via DAP pathway; LL-2,6-diaminopimelate from (S)-tetrahydrodipicolinate (succinylase route): step 3/3. In terms of biological role, catalyzes the hydrolysis of N-succinyl-L,L-diaminopimelic acid (SDAP), forming succinate and LL-2,6-diaminopimelate (DAP), an intermediate involved in the bacterial biosynthesis of lysine and meso-diaminopimelic acid, an essential component of bacterial cell walls. This is Succinyl-diaminopimelate desuccinylase from Buchnera aphidicola subsp. Baizongia pistaciae (strain Bp).